The primary structure comprises 728 residues: Bacteriophytochrome (728 aa).

An a tetrapyrrole-binding site is contributed by C12. A chromophore binding domain region spans residues 17-495; the sequence is IHVPGAIQPH…RLDLMELCLN (479 aa). The 165-residue stretch at 139–303 folds into the GAF domain; it reads DTASLLSNVT…IFSQVCSAIV (165 aa). A Histidine kinase domain is found at 510–721; the sequence is VLGHDLRNPL…TFCLRLPVRQ (212 aa). H513 carries the post-translational modification Phosphohistidine; by autocatalysis.

The protein in the N-terminal section; belongs to the phytochrome family. Contains one covalently linked tetrapyrrole chromophore.

The enzyme catalyses ATP + protein L-histidine = ADP + protein N-phospho-L-histidine.. Photoreceptor which exists in two forms that are reversibly interconvertible by light: the R form that absorbs maximally in the red region of the spectrum and the FR form that absorbs maximally in the far-red region. This chain is Bacteriophytochrome (bphP), found in Pseudomonas aeruginosa (strain ATCC 15692 / DSM 22644 / CIP 104116 / JCM 14847 / LMG 12228 / 1C / PRS 101 / PAO1).